We begin with the raw amino-acid sequence, 432 residues long: UDP-glucose 6-dehydrogenase (432 aa).

Residues 2–19, Val-11, Asp-30, Lys-35, Thr-121, and Glu-152 each bind NAD(+); that span reads NITFIGSGYVGLVSGIIM. Substrate is bound by residues 148–152, Lys-202, Asn-206, 247–251, and Gly-255; these read EFLRE and FLNAG. Catalysis depends on Cys-258, which acts as the Nucleophile. An NAD(+)-binding site is contributed by Lys-261. Lys-319 provides a ligand contact to substrate. Arg-326 contributes to the NAD(+) binding site.

Belongs to the UDP-glucose/GDP-mannose dehydrogenase family.

The enzyme catalyses UDP-alpha-D-glucose + 2 NAD(+) + H2O = UDP-alpha-D-glucuronate + 2 NADH + 3 H(+). It functions in the pathway nucleotide-sugar biosynthesis; UDP-alpha-D-glucuronate biosynthesis; UDP-alpha-D-glucuronate from UDP-alpha-D-glucose: step 1/1. The sequence is that of UDP-glucose 6-dehydrogenase (udg) from Rickettsia conorii (strain ATCC VR-613 / Malish 7).